Here is a 305-residue protein sequence, read N- to C-terminus: MNMQEVYEYLSTVLPEGHVKQDEMLKNHTHIKVGGKADVFVAPTNYDEIQEVIKYANKYNIPVTFLGNGSNVIIKDGGIRGITVSLIHITGVTVTGTTIVAQCGAAIIDVSRIALDHNLTGLEFACGIPGSVGGALYMNAGAYGGEISFVLTEAVVMTGDGELRTLTKEAFEFGYRKSVFANNHYIILEARFELEEGVHEEIKAKMDDLTFKRESKQPLEYPSCGSVFKRPPNNFAGKLIQDSGLQGKRIGGVEVSLKHAGFMVNVDNGTAQDYIDLIHFVQKTVEEKFGVKLEREVRIIGEDKE.

The FAD-binding PCMH-type domain occupies 33–197 (VGGKADVFVA…LEARFELEEG (165 aa)). Arginine 176 is a catalytic residue. The active-site Proton donor is the serine 226. Residue glutamate 296 is part of the active site.

The protein belongs to the MurB family. The cofactor is FAD.

It is found in the cytoplasm. It carries out the reaction UDP-N-acetyl-alpha-D-muramate + NADP(+) = UDP-N-acetyl-3-O-(1-carboxyvinyl)-alpha-D-glucosamine + NADPH + H(+). The protein operates within cell wall biogenesis; peptidoglycan biosynthesis. Functionally, cell wall formation. The protein is UDP-N-acetylenolpyruvoylglucosamine reductase 2 of Bacillus cereus (strain ZK / E33L).